Reading from the N-terminus, the 917-residue chain is Protein STE5 (917 aa).

Disordered stretches follow at residues 1–25 (MMETPTDNIVSPFHNFGSSTQYSGT) and 58–151 (FQRS…LSDN). Polar residues predominate over residues 16-25 (FGSSTQYSGT). Residues 69 to 84 (SPSPISSSTFSFSPKS) are compositionally biased toward low complexity. Composition is skewed to polar residues over residues 85-110 (RVTSSNSSGNEDGNLMNTPSTVSTDY) and 118-138 (TSSLPRPNSNLFHASNSNLSR). Position 329 is a phosphoserine (Ser329). A compositionally biased stretch (acidic residues) spans 778–794 (HDDDDEEDNDDSTDNEL). A disordered region spans residues 778–821 (HDDDDEEDNDDSTDNELDNSSGSLSDAESTTTIHIDSPFDNENA). The span at 799-821 (GSLSDAESTTTIHIDSPFDNENA) shows a compositional bias: polar residues.

The protein to yeast FAR1. May be regulated at the phosphorylation level, and by the mating type of the cell and depends on an intact pheromone-response pathway.

The protein resides in the cytoplasm. Component of the pheromone signal transduction pathway. It mediates pheromone signals acting between STE20 and STE11. It is absolutely required for pheromone-induced transcription of FUS1. May play a role in cell-cycle arrest in response to pheromone. The chain is Protein STE5 (STE5) from Saccharomyces cerevisiae (strain ATCC 204508 / S288c) (Baker's yeast).